The chain runs to 187 residues: ATP-dependent protease subunit HslV (187 aa).

Residue threonine 7 is part of the active site. The Na(+) site is built by alanine 162, cysteine 165, and threonine 168.

It belongs to the peptidase T1B family. HslV subfamily. In terms of assembly, a double ring-shaped homohexamer of HslV is capped on each side by a ring-shaped HslU homohexamer. The assembly of the HslU/HslV complex is dependent on binding of ATP.

It localises to the cytoplasm. The catalysed reaction is ATP-dependent cleavage of peptide bonds with broad specificity.. With respect to regulation, allosterically activated by HslU binding. Its function is as follows. Protease subunit of a proteasome-like degradation complex believed to be a general protein degrading machinery. This chain is ATP-dependent protease subunit HslV, found in Methylococcus capsulatus (strain ATCC 33009 / NCIMB 11132 / Bath).